A 308-amino-acid polypeptide reads, in one-letter code: Mycothiol acetyltransferase (308 aa).

2 N-acetyltransferase domains span residues Glu16–Ala152 and Val165–Ser308. Glu47 serves as a coordination point for 1D-myo-inositol 2-(L-cysteinylamino)-2-deoxy-alpha-D-glucopyranoside. Leu91–Val93 is a binding site for acetyl-CoA. 3 residues coordinate 1D-myo-inositol 2-(L-cysteinylamino)-2-deoxy-alpha-D-glucopyranoside: Glu192, Lys231, and Glu240. Acetyl-CoA-binding positions include Leu244–Val246 and Gln251–Lys257. Tyr278 is a binding site for 1D-myo-inositol 2-(L-cysteinylamino)-2-deoxy-alpha-D-glucopyranoside.

This sequence belongs to the acetyltransferase family. MshD subfamily. Monomer.

The catalysed reaction is 1D-myo-inositol 2-(L-cysteinylamino)-2-deoxy-alpha-D-glucopyranoside + acetyl-CoA = mycothiol + CoA + H(+). In terms of biological role, catalyzes the transfer of acetyl from acetyl-CoA to desacetylmycothiol (Cys-GlcN-Ins) to form mycothiol. The polypeptide is Mycothiol acetyltransferase (Streptomyces avermitilis (strain ATCC 31267 / DSM 46492 / JCM 5070 / NBRC 14893 / NCIMB 12804 / NRRL 8165 / MA-4680)).